The primary structure comprises 85 residues: uncharacterized protein (85 aa).

The N-terminal stretch at 1–19 is a signal peptide; sequence MKTIFTVGAVVLATCLLSG. Residue Cys-20 is the site of N-palmitoyl cysteine attachment. Cys-20 is lipidated: S-diacylglycerol cysteine.

Its subcellular location is the cell outer membrane. This is an uncharacterized protein from Escherichia coli (strain K12).